The chain runs to 513 residues: 2-isopropylmalate synthase (513 aa).

In terms of domain architecture, Pyruvate carboxyltransferase spans 5–268; it reads LIIFDTTLRD…DVGVDTTQIV (264 aa). 4 residues coordinate Mn(2+): Asp14, His202, His204, and Asn239. The regulatory domain stretch occupies residues 394 to 513; that stretch reads RFVSLSQRSE…KSSEKLNPQI (120 aa).

This sequence belongs to the alpha-IPM synthase/homocitrate synthase family. LeuA type 1 subfamily. As to quaternary structure, homodimer. Mn(2+) serves as cofactor.

The protein localises to the cytoplasm. The enzyme catalyses 3-methyl-2-oxobutanoate + acetyl-CoA + H2O = (2S)-2-isopropylmalate + CoA + H(+). Its pathway is amino-acid biosynthesis; L-leucine biosynthesis; L-leucine from 3-methyl-2-oxobutanoate: step 1/4. Its function is as follows. Catalyzes the condensation of the acetyl group of acetyl-CoA with 3-methyl-2-oxobutanoate (2-ketoisovalerate) to form 3-carboxy-3-hydroxy-4-methylpentanoate (2-isopropylmalate). This chain is 2-isopropylmalate synthase, found in Ralstonia nicotianae (strain ATCC BAA-1114 / GMI1000) (Ralstonia solanacearum).